A 47-amino-acid chain; its full sequence is uncharacterized protein (47 aa).

Residues 22 to 47 (VGPRTKRANQASPPVGRHSSRLMCPG) are disordered.

This is an uncharacterized protein from Saccharomyces cerevisiae (strain ATCC 204508 / S288c) (Baker's yeast).